The sequence spans 653 residues: Asparagine--tRNA ligase, cytoplasmic (653 aa).

The protein belongs to the class-II aminoacyl-tRNA synthetase family.

The protein localises to the cytoplasm. The catalysed reaction is tRNA(Asn) + L-asparagine + ATP = L-asparaginyl-tRNA(Asn) + AMP + diphosphate + H(+). This chain is Asparagine--tRNA ligase, cytoplasmic (asnS1), found in Dictyostelium discoideum (Social amoeba).